A 202-amino-acid polypeptide reads, in one-letter code: Small ribosomal subunit protein uS4 (202 aa).

The tract at residues 22-43 (TRKSARRAYPPGQHGQNRRKRS) is disordered. One can recognise an S4 RNA-binding domain in the interval 90–152 (MRLDNTVFRL…EKSKEMVKTN (63 aa)).

Belongs to the universal ribosomal protein uS4 family. In terms of assembly, part of the 30S ribosomal subunit. Contacts protein S5. The interaction surface between S4 and S5 is involved in control of translational fidelity.

Its function is as follows. One of the primary rRNA binding proteins, it binds directly to 16S rRNA where it nucleates assembly of the body of the 30S subunit. With S5 and S12 plays an important role in translational accuracy. This Trichodesmium erythraeum (strain IMS101) protein is Small ribosomal subunit protein uS4.